Here is a 418-residue protein sequence, read N- to C-terminus: UDP-N-acetylglucosamine 1-carboxyvinyltransferase (418 aa).

22–23 (KN) contacts phosphoenolpyruvate. Arg93 is a UDP-N-acetyl-alpha-D-glucosamine binding site. The active-site Proton donor is Cys117. Cys117 carries the 2-(S-cysteinyl)pyruvic acid O-phosphothioketal modification. The UDP-N-acetyl-alpha-D-glucosamine site is built by Asp305 and Val327.

It belongs to the EPSP synthase family. MurA subfamily.

The protein localises to the cytoplasm. It catalyses the reaction phosphoenolpyruvate + UDP-N-acetyl-alpha-D-glucosamine = UDP-N-acetyl-3-O-(1-carboxyvinyl)-alpha-D-glucosamine + phosphate. It participates in cell wall biogenesis; peptidoglycan biosynthesis. Cell wall formation. Adds enolpyruvyl to UDP-N-acetylglucosamine. In Alkalilimnicola ehrlichii (strain ATCC BAA-1101 / DSM 17681 / MLHE-1), this protein is UDP-N-acetylglucosamine 1-carboxyvinyltransferase.